The sequence spans 183 residues: Adenine phosphoribosyltransferase (183 aa).

The protein belongs to the purine/pyrimidine phosphoribosyltransferase family. In terms of assembly, homodimer.

It localises to the cytoplasm. It catalyses the reaction AMP + diphosphate = 5-phospho-alpha-D-ribose 1-diphosphate + adenine. Its pathway is purine metabolism; AMP biosynthesis via salvage pathway; AMP from adenine: step 1/1. Its function is as follows. Catalyzes a salvage reaction resulting in the formation of AMP, that is energically less costly than de novo synthesis. The sequence is that of Adenine phosphoribosyltransferase from Photorhabdus laumondii subsp. laumondii (strain DSM 15139 / CIP 105565 / TT01) (Photorhabdus luminescens subsp. laumondii).